A 78-amino-acid polypeptide reads, in one-letter code: U-scoloptoxin(04)-Er1a (78 aa).

The N-terminal stretch at 1 to 24 (MTRHLIFAAVLLVCLFVCWNAIGA) is a signal peptide. The propeptide occupies 25–28 (QDAR).

This sequence belongs to the scoloptoxin-04 family. Contains 2 disulfide bonds. In terms of tissue distribution, expressed by the venom gland.

It is found in the secreted. This chain is U-scoloptoxin(04)-Er1a, found in Ethmostigmus rubripes (Giant centipede).